Reading from the N-terminus, the 240-residue chain is UDP-2,3-diacylglucosamine hydrolase (240 aa).

Mn(2+) contacts are provided by Asp-8, His-10, Asp-41, Asn-79, and His-114. 79 to 80 (NR) is a binding site for substrate. Positions 122, 160, 164, 167, and 195 each coordinate substrate. Residues His-195 and His-197 each coordinate Mn(2+).

This sequence belongs to the LpxH family. It depends on Mn(2+) as a cofactor.

Its subcellular location is the cell inner membrane. The catalysed reaction is UDP-2-N,3-O-bis[(3R)-3-hydroxytetradecanoyl]-alpha-D-glucosamine + H2O = 2-N,3-O-bis[(3R)-3-hydroxytetradecanoyl]-alpha-D-glucosaminyl 1-phosphate + UMP + 2 H(+). It participates in glycolipid biosynthesis; lipid IV(A) biosynthesis; lipid IV(A) from (3R)-3-hydroxytetradecanoyl-[acyl-carrier-protein] and UDP-N-acetyl-alpha-D-glucosamine: step 4/6. Hydrolyzes the pyrophosphate bond of UDP-2,3-diacylglucosamine to yield 2,3-diacylglucosamine 1-phosphate (lipid X) and UMP by catalyzing the attack of water at the alpha-P atom. Involved in the biosynthesis of lipid A, a phosphorylated glycolipid that anchors the lipopolysaccharide to the outer membrane of the cell. This Enterobacter sp. (strain 638) protein is UDP-2,3-diacylglucosamine hydrolase.